A 788-amino-acid chain; its full sequence is Glycerol-3-phosphate acyltransferase (788 aa).

The tract at residues 104-135 (LLPGRDPYHPNPRQQRRILRSDPQRARVMAGE) is disordered. An HXXXXD motif motif is present at residues 271-276 (SHRSYI).

This sequence belongs to the GPAT/DAPAT family.

It is found in the cell membrane. The catalysed reaction is sn-glycerol 3-phosphate + an acyl-CoA = a 1-acyl-sn-glycero-3-phosphate + CoA. It functions in the pathway phospholipid metabolism; CDP-diacylglycerol biosynthesis; CDP-diacylglycerol from sn-glycerol 3-phosphate: step 1/3. In Mycobacterium marinum (strain ATCC BAA-535 / M), this protein is Glycerol-3-phosphate acyltransferase.